The sequence spans 154 residues: Jupiter microtubule associated homolog 1 (154 aa).

N-acetylmethionine is present on Met1. Residues 1–19 (MTTTTTFKGVDPNSRNSSR) are compositionally biased toward polar residues. Residues 1 to 154 (MTTTTTFKGV…PGGKSSLVLG (154 aa)) form a disordered region. N-acetylthreonine; in Hematological and neurological expressed 1 protein, N-terminally processed is present on Thr2. Phosphoserine occurs at positions 28 and 31. The segment covering 47–59 (MASNIFGTPEENQ) has biased composition (polar residues). Residue Thr54 is modified to Phosphothreonine. The segment covering 60-71 (ASWAKSAGAKSS) has biased composition (low complexity). A phosphoserine mark is found at Ser71, Ser80, Ser87, Ser88, and Ser92. The segment covering 80–91 (SGLQRRNSSEAS) has biased composition (polar residues). Positions 96–108 (LDLKGEGDIHENV) are enriched in basic and acidic residues. The span at 125–138 (PAAPVPSPVAPAPV) shows a compositional bias: pro residues. Ser131 bears the Phosphoserine mark. Lys148 is subject to N6-acetyllysine.

It belongs to the JUPITER family. Interacts with the complex composed, at least, of APC, CTNNB1 and GSK3B; the interaction takes place with the inactive form of GSK3B (phosphorylated at 'Ser-9'). Expressed in testis, skeletal muscle, thymus, prostate, colon, peripheral blood cells, brain and placenta.

It is found in the nucleus. It localises to the cytoplasm. Modulates negatively AKT-mediated GSK3B signaling. Induces CTNNB1 'Ser-33' phosphorylation and degradation through the suppression of the inhibitory 'Ser-9' phosphorylation of GSK3B, which represses the function of the APC:CTNNB1:GSK3B complex and the interaction with CDH1/E-cadherin in adherent junctions. Plays a role in the regulation of cell cycle and cell adhesion. Has an inhibitory role on AR-signaling pathway through the induction of receptor proteasomal degradation. This is Jupiter microtubule associated homolog 1 from Homo sapiens (Human).